The following is a 139-amino-acid chain: Putative pre-16S rRNA nuclease (139 aa).

This sequence belongs to the YqgF nuclease family.

It is found in the cytoplasm. In terms of biological role, could be a nuclease involved in processing of the 5'-end of pre-16S rRNA. The sequence is that of Putative pre-16S rRNA nuclease from Streptococcus gordonii (strain Challis / ATCC 35105 / BCRC 15272 / CH1 / DL1 / V288).